The sequence spans 247 residues: Segregation and condensation protein A (247 aa).

The protein belongs to the ScpA family. In terms of assembly, component of a cohesin-like complex composed of ScpA, ScpB and the Smc homodimer, in which ScpA and ScpB bind to the head domain of Smc. The presence of the three proteins is required for the association of the complex with DNA.

The protein resides in the cytoplasm. Its function is as follows. Participates in chromosomal partition during cell division. May act via the formation of a condensin-like complex containing Smc and ScpB that pull DNA away from mid-cell into both cell halves. This chain is Segregation and condensation protein A, found in Bacillus cereus (strain G9842).